A 157-amino-acid polypeptide reads, in one-letter code: Endoribonuclease YbeY (157 aa).

Zn(2+)-binding residues include His-114, His-118, and His-124.

This sequence belongs to the endoribonuclease YbeY family. It depends on Zn(2+) as a cofactor.

Its subcellular location is the cytoplasm. In terms of biological role, single strand-specific metallo-endoribonuclease involved in late-stage 70S ribosome quality control and in maturation of the 3' terminus of the 16S rRNA. This Edwardsiella ictaluri (strain 93-146) protein is Endoribonuclease YbeY.